Here is a 444-residue protein sequence, read N- to C-terminus: Tol-Pal system protein TolB (444 aa).

The signal sequence occupies residues 1 to 26 (MNLFRSLAPMGLALALLLPAAAPALA). The segment covering 287-310 (ASGTRRQLTNSPSIETAPSYSPDG) has biased composition (polar residues). The segment at 287–311 (ASGTRRQLTNSPSIETAPSYSPDGS) is disordered.

It belongs to the TolB family. In terms of assembly, the Tol-Pal system is composed of five core proteins: the inner membrane proteins TolA, TolQ and TolR, the periplasmic protein TolB and the outer membrane protein Pal. They form a network linking the inner and outer membranes and the peptidoglycan layer.

Its subcellular location is the periplasm. In terms of biological role, part of the Tol-Pal system, which plays a role in outer membrane invagination during cell division and is important for maintaining outer membrane integrity. This is Tol-Pal system protein TolB from Cereibacter sphaeroides (strain ATCC 17025 / ATH 2.4.3) (Rhodobacter sphaeroides).